Here is a 239-residue protein sequence, read N- to C-terminus: Ribonuclease PH (239 aa).

Phosphate-binding positions include arginine 86 and 124 to 126 (GTR).

This sequence belongs to the RNase PH family. Homohexameric ring arranged as a trimer of dimers.

The enzyme catalyses tRNA(n+1) + phosphate = tRNA(n) + a ribonucleoside 5'-diphosphate. Functionally, phosphorolytic 3'-5' exoribonuclease that plays an important role in tRNA 3'-end maturation. Removes nucleotide residues following the 3'-CCA terminus of tRNAs; can also add nucleotides to the ends of RNA molecules by using nucleoside diphosphates as substrates, but this may not be physiologically important. Probably plays a role in initiation of 16S rRNA degradation (leading to ribosome degradation) during starvation. This Aromatoleum aromaticum (strain DSM 19018 / LMG 30748 / EbN1) (Azoarcus sp. (strain EbN1)) protein is Ribonuclease PH.